Here is a 575-residue protein sequence, read N- to C-terminus: Alpha-(1,6)-fucosyltransferase (575 aa).

Over 1–9 (MRAWTGSWR) the chain is Cytoplasmic. A helical; Signal-anchor for type II membrane protein membrane pass occupies residues 10–30 (WIMLILFAWGTLLFYIGGHLV). The Lumenal portion of the chain corresponds to 31-575 (RDNDHPDHSS…KYPTYPEAEK (545 aa)). Cystine bridges form between C204–C266, C212–C230, and C218–C222. Residues 206-493 (KARKLVCNIN…PDASANFHSL (288 aa)) enclose the GT23 domain. A Phosphoserine modification is found at S278. The short motif at 299-305 (PRPPYLP) is the SH3-binding element. Residues 365 to 366 (RR) are important for donor substrate binding. C465 and C472 are joined by a disulfide. The region spanning 502–563 (QNAHNQIAVY…PSYKVREKIE (62 aa)) is the SH3 domain.

This sequence belongs to the glycosyltransferase 23 family. Tyrosine phosphorylated by PKDCC/VLK.

It is found in the golgi apparatus. Its subcellular location is the golgi stack membrane. The catalysed reaction is N(4)-{beta-D-GlcNAc-(1-&gt;2)-alpha-D-Man-(1-&gt;3)-[beta-D-GlcNAc-(1-&gt;2)-alpha-D-Man-(1-&gt;6)]-beta-D-Man-(1-&gt;4)-beta-D-GlcNAc-(1-&gt;4)-beta-D-GlcNAc}-L-asparaginyl-[protein] + GDP-beta-L-fucose = an N(4)-{beta-D-GlcNAc-(1-&gt;2)-alpha-D-Man-(1-&gt;3)-[beta-D-GlcNAc-(1-&gt;2)-alpha-D-Man-(1-&gt;6)]-beta-D-Man-(1-&gt;4)-beta-D-GlcNAc-(1-&gt;4)-[alpha-L-Fuc-(1-&gt;6)]-beta-D-GlcNAc}-L-asparaginyl-[protein] + GDP + H(+). It participates in protein modification; protein glycosylation. Its function is as follows. Catalyzes the addition of fucose in alpha 1-6 linkage to the first GlcNAc residue, next to the peptide chains in N-glycans. This Rattus norvegicus (Rat) protein is Alpha-(1,6)-fucosyltransferase (Fut8).